Reading from the N-terminus, the 553-residue chain is Meiotic expression up-regulated protein 18 (553 aa).

Positions 267 to 305 (SNETLCSNDSKHRIARLKNEDNTQKPISKKRKSKKASHK) are disordered. The segment covering 275-289 (DSKHRIARLKNEDNT) has biased composition (basic and acidic residues). A compositionally biased stretch (basic residues) spans 293–304 (ISKKRKSKKASH).

The sequence is that of Meiotic expression up-regulated protein 18 (meu18) from Schizosaccharomyces pombe (strain 972 / ATCC 24843) (Fission yeast).